The sequence spans 276 residues: Diaminopimelate epimerase (276 aa).

Substrate contacts are provided by N13, Q46, and N66. C75 serves as the catalytic Proton donor. Substrate-binding positions include 76–77 (GN), N159, N192, and 210–211 (ER). The Proton acceptor role is filled by C219. 220-221 (GT) is a substrate binding site.

It belongs to the diaminopimelate epimerase family. In terms of assembly, homodimer.

It localises to the cytoplasm. The catalysed reaction is (2S,6S)-2,6-diaminopimelate = meso-2,6-diaminopimelate. The protein operates within amino-acid biosynthesis; L-lysine biosynthesis via DAP pathway; DL-2,6-diaminopimelate from LL-2,6-diaminopimelate: step 1/1. In terms of biological role, catalyzes the stereoinversion of LL-2,6-diaminopimelate (L,L-DAP) to meso-diaminopimelate (meso-DAP), a precursor of L-lysine and an essential component of the bacterial peptidoglycan. The sequence is that of Diaminopimelate epimerase from Pseudomonas aeruginosa (strain UCBPP-PA14).